We begin with the raw amino-acid sequence, 91 residues long: Protein transport protein Sec61 subunit beta (91 aa).

A disordered region spans residues 1-45; the sequence is MSTSAQVPGGPAAQMKRRNNAQRQEAKASQRPTSTRSVGAGGSSS. Residues 1–62 are Cytoplasmic-facing; the sequence is MSTSAQVPGG…DESQGLKVDP (62 aa). A compositionally biased stretch (polar residues) spans 30–45; the sequence is QRPTSTRSVGAGGSSS. Residues 63 to 83 form a helical membrane-spanning segment; the sequence is VVVMVLSLGFIFSVVALHILA.

This sequence belongs to the SEC61-beta family. In terms of assembly, heterotrimeric complex composed of SEC61, SEB1 and SSS1.

It localises to the endoplasmic reticulum membrane. In terms of biological role, necessary for protein translocation in the endoplasmic reticulum. This Yarrowia lipolytica (strain CLIB 122 / E 150) (Yeast) protein is Protein transport protein Sec61 subunit beta (SBH1).